A 484-amino-acid chain; its full sequence is MDEPMVDASGAQVKVTFTTTEADLQLPESKRQLLVPADIRRYGLSRVLNSESMLDTGSIPFDFLVNGSFLRTSLEDYLTNNGLSLESNLTLQYVRSLIPPVYEASFEHDDWVSAVDVLSASSPSGRWSGDNFQRGQDRILSASFDGLLRIWNASGQVIATSPSGSHGGHTASIKAAKFLTNSQLASAGMDRTVRVWKYTESDHFSGDLKPTLELYGHTGSIDSLEVDGASKRILTASADGSIGFWSTSKASAPEADSSLLPNAHTSKRRKVTTSVTAAQRGPLSLMPIHSAPASAAVFDPRDRTVAYSASQDHTLRTIDLTTSTVVTTHSTSHPLLSLCALPRGNSASPLLAAGTAARHITLVDPRASAATTSVMTLRGHANKPVGLCASPRNEYALVSGAHDGTCRVWDLRSVRPATQEEGGLGSVSEAVYVIEREGAKGGKKTVAGEGCKVFGVVWDAELGIVSGAEDKRVQINAGRDVVAE.

The tract at residues 13 to 95 is ubiquitin-like (UBL) domain; the sequence is VKVTFTTTEA…ESNLTLQYVR (83 aa). WD repeat units follow at residues 122–161, 168–206, 216–255, 288–328, 330–373, 379–419, and 448–484; these read SPSG…IATS, GHTA…HFSG, GHTG…APEA, IHSA…VVTT, STSH…ATTS, GHAN…PATQ, and GEGC…VVAE.

Belongs to the WD repeat WDR12/YTM1 family. Component of the NOP7 complex, composed of ERB1, NOP7 and YTM1. The complex is held together by ERB1, which interacts with NOP7 via its N-terminal domain and with YTM1 via a high-affinity interaction between the seven-bladed beta-propeller domains of the 2 proteins. The NOP7 complex associates with the 66S pre-ribosome. Interacts (via UBL domain) with MDN1 (via VWFA/MIDAS domain).

The protein localises to the nucleus. It is found in the nucleolus. The protein resides in the nucleoplasm. Functionally, component of the NOP7 complex, which is required for maturation of the 25S and 5.8S ribosomal RNAs and formation of the 60S ribosome. The protein is Ribosome biogenesis protein YTM1 of Chaetomium globosum (strain ATCC 6205 / CBS 148.51 / DSM 1962 / NBRC 6347 / NRRL 1970) (Soil fungus).